The following is a 212-amino-acid chain: Cytidylate kinase (212 aa).

An ATP-binding site is contributed by 7 to 15; it reads GPAASGKGT.

It belongs to the cytidylate kinase family. Type 1 subfamily.

Its subcellular location is the cytoplasm. It carries out the reaction CMP + ATP = CDP + ADP. The enzyme catalyses dCMP + ATP = dCDP + ADP. This is Cytidylate kinase from Rhodopseudomonas palustris (strain BisB18).